The primary structure comprises 417 residues: NADH-quinone oxidoreductase subunit D (417 aa).

Belongs to the complex I 49 kDa subunit family. NDH-1 is composed of 14 different subunits. Subunits NuoB, C, D, E, F, and G constitute the peripheral sector of the complex.

It localises to the cell inner membrane. The catalysed reaction is a quinone + NADH + 5 H(+)(in) = a quinol + NAD(+) + 4 H(+)(out). In terms of biological role, NDH-1 shuttles electrons from NADH, via FMN and iron-sulfur (Fe-S) centers, to quinones in the respiratory chain. The immediate electron acceptor for the enzyme in this species is believed to be ubiquinone. Couples the redox reaction to proton translocation (for every two electrons transferred, four hydrogen ions are translocated across the cytoplasmic membrane), and thus conserves the redox energy in a proton gradient. The polypeptide is NADH-quinone oxidoreductase subunit D (Acidithiobacillus ferrooxidans (strain ATCC 53993 / BNL-5-31) (Leptospirillum ferrooxidans (ATCC 53993))).